The chain runs to 343 residues: Methylthioribose-1-phosphate isomerase (343 aa).

Residues 44–46, Arg85, and Gln192 each bind substrate; that span reads RGA. The Proton donor role is filled by Asp233. A substrate-binding site is contributed by 243 to 244; that stretch reads NK.

The protein belongs to the eIF-2B alpha/beta/delta subunits family. MtnA subfamily.

It carries out the reaction 5-(methylsulfanyl)-alpha-D-ribose 1-phosphate = 5-(methylsulfanyl)-D-ribulose 1-phosphate. Its pathway is amino-acid biosynthesis; L-methionine biosynthesis via salvage pathway; L-methionine from S-methyl-5-thio-alpha-D-ribose 1-phosphate: step 1/6. In terms of biological role, catalyzes the interconversion of methylthioribose-1-phosphate (MTR-1-P) into methylthioribulose-1-phosphate (MTRu-1-P). The chain is Methylthioribose-1-phosphate isomerase from Carboxydothermus hydrogenoformans (strain ATCC BAA-161 / DSM 6008 / Z-2901).